Consider the following 236-residue polypeptide: tRNA (guanine-N(1)-)-methyltransferase (236 aa).

S-adenosyl-L-methionine is bound by residues G116 and 136–141 (LGDFVL).

This sequence belongs to the RNA methyltransferase TrmD family. Homodimer.

Its subcellular location is the cytoplasm. It catalyses the reaction guanosine(37) in tRNA + S-adenosyl-L-methionine = N(1)-methylguanosine(37) in tRNA + S-adenosyl-L-homocysteine + H(+). Its function is as follows. Specifically methylates guanosine-37 in various tRNAs. This chain is tRNA (guanine-N(1)-)-methyltransferase, found in Thiobacillus denitrificans (strain ATCC 25259 / T1).